Consider the following 291-residue polypeptide: Undecaprenyl-diphosphatase (291 aa).

The next 8 helical transmembrane spans lie at 1–21, 48–68, 102–122, 126–146, 162–182, 203–223, 231–251, and 267–287; these read MFII…LTEF, SAFT…AWVF, LHVL…DDFI, LFSV…MIIA, INYF…WPGF, SDFT…LSLL, IADI…GLIA, and FAIY…GFGI.

This sequence belongs to the UppP family.

Its subcellular location is the cell membrane. It catalyses the reaction di-trans,octa-cis-undecaprenyl diphosphate + H2O = di-trans,octa-cis-undecaprenyl phosphate + phosphate + H(+). Functionally, catalyzes the dephosphorylation of undecaprenyl diphosphate (UPP). Confers resistance to bacitracin. This is Undecaprenyl-diphosphatase from Staphylococcus aureus (strain bovine RF122 / ET3-1).